The chain runs to 137 residues: ATP synthase epsilon chain (137 aa).

Belongs to the ATPase epsilon chain family. F-type ATPases have 2 components, CF(1) - the catalytic core - and CF(0) - the membrane proton channel. CF(1) has five subunits: alpha(3), beta(3), gamma(1), delta(1), epsilon(1). CF(0) has three main subunits: a, b and c.

It is found in the cell membrane. In terms of biological role, produces ATP from ADP in the presence of a proton gradient across the membrane. This is ATP synthase epsilon chain from Thermobifida fusca (strain YX).